The primary structure comprises 178 residues: Large ribosomal subunit protein uL6 (178 aa).

Belongs to the universal ribosomal protein uL6 family. As to quaternary structure, part of the 50S ribosomal subunit.

This protein binds to the 23S rRNA, and is important in its secondary structure. It is located near the subunit interface in the base of the L7/L12 stalk, and near the tRNA binding site of the peptidyltransferase center. The polypeptide is Large ribosomal subunit protein uL6 (Lactococcus lactis subsp. cremoris (strain MG1363)).